The following is a 491-amino-acid chain: Glutamyl-tRNA(Gln) amidotransferase subunit A (491 aa).

Catalysis depends on charge relay system residues lysine 77 and serine 152. Serine 176 acts as the Acyl-ester intermediate in catalysis.

It belongs to the amidase family. GatA subfamily. In terms of assembly, heterotrimer of A, B and C subunits.

The enzyme catalyses L-glutamyl-tRNA(Gln) + L-glutamine + ATP + H2O = L-glutaminyl-tRNA(Gln) + L-glutamate + ADP + phosphate + H(+). Allows the formation of correctly charged Gln-tRNA(Gln) through the transamidation of misacylated Glu-tRNA(Gln) in organisms which lack glutaminyl-tRNA synthetase. The reaction takes place in the presence of glutamine and ATP through an activated gamma-phospho-Glu-tRNA(Gln). The chain is Glutamyl-tRNA(Gln) amidotransferase subunit A from Chlamydia trachomatis serovar L2 (strain ATCC VR-902B / DSM 19102 / 434/Bu).